Reading from the N-terminus, the 179-residue chain is MSRIGKLPIPIPKKVTITIEGQKVTVKGPLGELSRVLPPEIAVKEQENTIIVKPQEQSRRARQRYGLCRTLVANMVEGVSKGYEKRLVIQGVGYRAQVQGKTLVLNVGYSKPVEMPAPEGINIAVENNTNVIVNGINKELVGNTAAKIRAVRPPEVYKGKGVRYAGEVIKLKAGKSGKK.

The protein belongs to the universal ribosomal protein uL6 family. Part of the 50S ribosomal subunit.

In terms of biological role, this protein binds to the 23S rRNA, and is important in its secondary structure. It is located near the subunit interface in the base of the L7/L12 stalk, and near the tRNA binding site of the peptidyltransferase center. The chain is Large ribosomal subunit protein uL6 from Trichodesmium erythraeum (strain IMS101).